A 357-amino-acid polypeptide reads, in one-letter code: Transcription factor unc-86 (357 aa).

A POU-IV box motif is present at residues 35–44 (RAAQVALADI). Positions 155 to 232 (DMDTDPRQLE…ILHSWLEKAE (78 aa)) constitute a POU-specific domain. Residues 253 to 312 (KKRKRTSIAAPEKRELEQFFKQQPRPSGERIASIADRLDLKKNVVRVWFCNQRQKQKRDF) constitute a DNA-binding region (homeobox).

Belongs to the POU transcription factor family. Class-4 subfamily. In terms of assembly, interacts with mec-3; the heterooligomer binds to the promoters of mec-3, mec-4 and mec-7. In terms of tissue distribution, specific to neurons and neuroblasts. Expressed in CEM head neurons and in IL2, URA, URB, URX and URY neurons. Not expressed in olfactory sensory neurons but expressed in AIZ interneurons.

It is found in the nucleus. Functionally, transcription factor required for correct cell fate determination and differentiation in diverse neuronal cell lineages where it plays a role in specifying the fate of daughter cells during cell divisions. Involved in sensory neuron production and function. Binds both alone and with mec-3 to the mec-3 promoter to initiate and maintain mec-3 expression which is required for sensory neuron differentiation. In addition, binds both alone and with mec-3 to the promoters of mec-4 and mec-7 which act to regulate sensory neuron function. Involved in determining the identity of the serotonergic NSM neurons and the cholinergic IL2 sensory and URA motor neurons. Promotes expression of the cfi-1 transcription factor in the URA and IL2 neurons which in turn activates normal URA and IL2 gene expression. Required to determine the identity of BDU sensory neurons in concert with transcription factor unc-86, regulating expression of a number of genes, including transcription factors ceh-14 and ahr-1, neuropeptides flp-10, nlp-1 and nlp-15, and tyramine receptor-encoding ser-2. Regulates expression of a number of genes in NSM neurons including bas-1, cat-1, dop-3, mgl-3, nlp-13, scd-2 and ptps-1. In the IL2 neurons, required for expression of cho-1, gcy-19, klp-6, lag-2, unc-5 and unc-17. Promotes expression of pkd-2 in the male-specific CEM head neurons. Required for dauer-specific branching of IL2Q neurons and nictation behavior. Controls both the timing and direction of axon outgrowth in HSN neurons. Plays a role in serotonin production by regulating expression of the tryptophan hydrolase tph-1 which catalyzes serotonin synthesis, in the AIM, NSM, HSN and RIH neurons. Involved in regulation of lin-11 expression in the AIZ interneurons, the major interneurons of the olfactory pathway, and is required for odortaxis behavior. Involved in neurite pruning between AIM neurons during larval development by regulating the expression of transcription factor mbr-1. Required for correct localization of unc-40. The chain is Transcription factor unc-86 (unc-86) from Caenorhabditis elegans.